The sequence spans 747 residues: DNA ligase 1 (747 aa).

Positions 1-84 (MQKSITSFFK…KEVDDKTTDK (84 aa)) are disordered. S18, S20, S42, S44, S46, S60, and S65 each carry phosphoserine. Basic and acidic residues predominate over residues 26-42 (PKIDAKTELPDEPHIKS). Basic and acidic residues predominate over residues 60 to 84 (SEEKTSPVKNVKKEPKEVDDKTTDK). K395 serves as the catalytic N6-AMP-lysine intermediate. Residues 725–740 (QSQDQVKNNQKSSTQM) show a composition bias toward polar residues. A disordered region spans residues 725–747 (QSQDQVKNNQKSSTQMEMEDEFY).

Belongs to the ATP-dependent DNA ligase family.

The protein localises to the nucleus. It carries out the reaction ATP + (deoxyribonucleotide)n-3'-hydroxyl + 5'-phospho-(deoxyribonucleotide)m = (deoxyribonucleotide)n+m + AMP + diphosphate.. Functionally, DNA ligase that seals nicks in double-stranded DNA during DNA replication, DNA recombination and DNA repair. In Drosophila melanogaster (Fruit fly), this protein is DNA ligase 1.